Consider the following 51-residue polypeptide: Structural protein ORF5a (51 aa).

Residues 11-28 (RGLLLAIAFFVVYRAVLF) form a helical membrane-spanning segment.

This sequence belongs to the arteriviridae ORF5a protein family. In terms of assembly, interacts with GP2b and GP4.

Its subcellular location is the virion. The protein resides in the host cell membrane. Functionally, minor virion component that plays an essential role in virus infectivity. The protein is Structural protein ORF5a of Porcine reproductive and respiratory syndrome virus (strain VR-2332) (PRRSV).